We begin with the raw amino-acid sequence, 961 residues long: Vinculin (961 aa).

Tandem repeats lie at residues 258–362 and 371–470. A 2 X repeats region spans residues 258–470; it reads ELDNLTVLKK…LTQKLYELKA (213 aa). Residues 720–778 form a disordered region; the sequence is AIAPPQPPPLPTSLPPPIPELSALHLSNQNAERAPPRPPLPREGLAPVRPPPPETDDED. Over residues 723–738 the composition is skewed to pro residues; sequence PPQPPPLPTSLPPPIP. Phosphothreonine is present on Thr774.

The protein belongs to the vinculin/alpha-catenin family. As to quaternary structure, exhibits self-association properties.

It is found in the cytoplasm. It localises to the cytoskeleton. Its subcellular location is the cell junction. The protein localises to the adherens junction. The protein resides in the cell membrane. In terms of biological role, involved in cell adhesion. May be involved in the attachment of the actin-based microfilaments to the plasma membrane. This Drosophila melanogaster (Fruit fly) protein is Vinculin (Vinc).